Consider the following 872-residue polypeptide: Probable LRR receptor-like serine/threonine-protein kinase At1g51880 (872 aa).

The signal sequence occupies residues 1–23; it reads MKSIHGFLLFLITAYVILESVQA. The Extracellular portion of the chain corresponds to 24-513; that stretch reads QDQLGFISLD…GKSKKVPMIP (490 aa). N-linked (GlcNAc...) asparagine glycosylation is found at Asn40, Asn49, Asn96, Asn181, Asn255, Asn268, Asn294, Asn339, and Asn401. 3 LRR repeats span residues 411–434, 435–457, and 459–482; these read RIIS…SKLT, QLIE…FADM, and LLKL…IQQR. N-linked (GlcNAc...) asparagine glycans are attached at residues Asn464 and Asn472. Residues 514 to 534 form a helical membrane-spanning segment; it reads IVASVAGVFALLVILAIFFVV. Residues 535-872 are Cytoplasmic-facing; it reads RRKNGESNKG…SASEFSPGAR (338 aa). Thr557 bears the Phosphothreonine mark. One can recognise a Protein kinase domain in the interval 566–838; it reads NNFERVLGKG…HVVTELNECV (273 aa). Residues 572-580 and Lys593 each bind ATP; that span reads LGKGGFGTV. At Tyr638 the chain carries Phosphotyrosine. The active-site Proton acceptor is the Asp690. At Ser724 the chain carries Phosphoserine. Phosphothreonine occurs at positions 725 and 730. Tyr738 is modified (phosphotyrosine).

It belongs to the protein kinase superfamily. Ser/Thr protein kinase family.

Its subcellular location is the membrane. It catalyses the reaction L-seryl-[protein] + ATP = O-phospho-L-seryl-[protein] + ADP + H(+). The enzyme catalyses L-threonyl-[protein] + ATP = O-phospho-L-threonyl-[protein] + ADP + H(+). In Arabidopsis thaliana (Mouse-ear cress), this protein is Probable LRR receptor-like serine/threonine-protein kinase At1g51880.